Here is a 201-residue protein sequence, read N- to C-terminus: MARYTGPATRKSRRLGVDLVGGDQSFEKRPYPPGQHGRARIKESEYRTQLQEKQKARFTYGVLEKQFRRYYDEANRQPGKTGDNLLRILESRLDNVVYRAGLARTRRMARQLVSHGHFTVNGVKVDIPSYRVSQYDIIDVREKSLNTDPFVIARETAGDRPIPSWLQVVGERQRILVHQLPERAQIDVPLTEQLIVELYSK.

The tract at residues 1–38 is disordered; that stretch reads MARYTGPATRKSRRLGVDLVGGDQSFEKRPYPPGQHGR. An S4 RNA-binding domain is found at 91 to 157; that stretch reads SRLDNVVYRA…DPFVIARETA (67 aa).

This sequence belongs to the universal ribosomal protein uS4 family. In terms of assembly, part of the 30S ribosomal subunit. Contacts protein S5. The interaction surface between S4 and S5 is involved in control of translational fidelity.

Its function is as follows. One of the primary rRNA binding proteins, it binds directly to 16S rRNA where it nucleates assembly of the body of the 30S subunit. With S5 and S12 plays an important role in translational accuracy. In Mycobacterium sp. (strain JLS), this protein is Small ribosomal subunit protein uS4.